Here is a 440-residue protein sequence, read N- to C-terminus: Ribulose bisphosphate carboxylase large chain (440 aa).

Lysine 4 carries the post-translational modification N6,N6,N6-trimethyllysine. Residues asparagine 113 and threonine 163 each coordinate substrate. Catalysis depends on lysine 165, which acts as the Proton acceptor. Residue lysine 167 coordinates substrate. Lysine 191, aspartate 193, and glutamate 194 together coordinate Mg(2+). An N6-carboxylysine modification is found at lysine 191. The active-site Proton acceptor is histidine 284. Substrate is bound by residues arginine 285, histidine 317, and serine 369.

It belongs to the RuBisCO large chain family. Type I subfamily. In terms of assembly, heterohexadecamer of 8 large chains and 8 small chains; disulfide-linked. The disulfide link is formed within the large subunit homodimers. Mg(2+) is required as a cofactor. The disulfide bond which can form in the large chain dimeric partners within the hexadecamer appears to be associated with oxidative stress and protein turnover.

It is found in the plastid. Its subcellular location is the chloroplast. It catalyses the reaction 2 (2R)-3-phosphoglycerate + 2 H(+) = D-ribulose 1,5-bisphosphate + CO2 + H2O. The catalysed reaction is D-ribulose 1,5-bisphosphate + O2 = 2-phosphoglycolate + (2R)-3-phosphoglycerate + 2 H(+). Functionally, ruBisCO catalyzes two reactions: the carboxylation of D-ribulose 1,5-bisphosphate, the primary event in carbon dioxide fixation, as well as the oxidative fragmentation of the pentose substrate in the photorespiration process. Both reactions occur simultaneously and in competition at the same active site. This chain is Ribulose bisphosphate carboxylase large chain, found in Ptychomitrium gardneri (Gardner's ptychomitrium moss).